We begin with the raw amino-acid sequence, 473 residues long: Photosystem II CP43 reaction center protein (473 aa).

A propeptide spanning residues M1 to E14 is cleaved from the precursor. T15 carries the post-translational modification N-acetylthreonine. T15 is modified (phosphothreonine). The next 5 membrane-spanning stretches (helical) occupy residues L69–A93, L134–N155, K178–T200, K255–S275, and W291–A312. Position 367 (E367) interacts with [CaMn4O5] cluster. The helical transmembrane segment at R447 to P471 threads the bilayer.

It belongs to the PsbB/PsbC family. PsbC subfamily. In terms of assembly, PSII is composed of 1 copy each of membrane proteins PsbA, PsbB, PsbC, PsbD, PsbE, PsbF, PsbH, PsbI, PsbJ, PsbK, PsbL, PsbM, PsbT, PsbX, PsbY, PsbZ, Psb30/Ycf12, at least 3 peripheral proteins of the oxygen-evolving complex and a large number of cofactors. It forms dimeric complexes. Binds multiple chlorophylls and provides some of the ligands for the Ca-4Mn-5O cluster of the oxygen-evolving complex. It may also provide a ligand for a Cl- that is required for oxygen evolution. PSII binds additional chlorophylls, carotenoids and specific lipids. serves as cofactor.

It is found in the plastid. The protein localises to the chloroplast thylakoid membrane. Functionally, one of the components of the core complex of photosystem II (PSII). It binds chlorophyll and helps catalyze the primary light-induced photochemical processes of PSII. PSII is a light-driven water:plastoquinone oxidoreductase, using light energy to abstract electrons from H(2)O, generating O(2) and a proton gradient subsequently used for ATP formation. The protein is Photosystem II CP43 reaction center protein of Adiantum capillus-veneris (Maidenhair fern).